The sequence spans 115 residues: Large ribosomal subunit protein bL20c (115 aa).

The protein belongs to the bacterial ribosomal protein bL20 family.

The protein resides in the plastid. Its subcellular location is the chloroplast. In terms of biological role, binds directly to 23S ribosomal RNA and is necessary for the in vitro assembly process of the 50S ribosomal subunit. It is not involved in the protein synthesizing functions of that subunit. In Pleurastrum terricola (Filamentous green alga), this protein is Large ribosomal subunit protein bL20c.